A 359-amino-acid polypeptide reads, in one-letter code: Dihydroorotate dehydrogenase (quinone) (359 aa).

FMN is bound by residues alanine 65–lysine 69 and threonine 89. Lysine 69 serves as a coordination point for substrate. Asparagine 114–phenylalanine 118 lines the substrate pocket. The FMN site is built by asparagine 149 and asparagine 182. Asparagine 182 provides a ligand contact to substrate. The active-site Nucleophile is the serine 185. Asparagine 187 contacts substrate. FMN-binding residues include lysine 233 and threonine 261. Asparagine 262–threonine 263 is a binding site for substrate. Residues glycine 284, glycine 313, and tyrosine 334–threonine 335 each bind FMN.

Belongs to the dihydroorotate dehydrogenase family. Type 2 subfamily. As to quaternary structure, monomer. FMN is required as a cofactor.

It localises to the cell membrane. The catalysed reaction is (S)-dihydroorotate + a quinone = orotate + a quinol. It functions in the pathway pyrimidine metabolism; UMP biosynthesis via de novo pathway; orotate from (S)-dihydroorotate (quinone route): step 1/1. In terms of biological role, catalyzes the conversion of dihydroorotate to orotate with quinone as electron acceptor. This Paracidovorax citrulli (strain AAC00-1) (Acidovorax citrulli) protein is Dihydroorotate dehydrogenase (quinone).